The sequence spans 267 residues: Hydroxynaphthalene reductase-like protein Arp2 (267 aa).

Positions 25, 45, 71, and 98 each coordinate NADP(+). Active-site proton donor residues include serine 147 and serine 148. NADP(+) is bound by residues tyrosine 162, lysine 166, valine 195, and threonine 197. Tyrosine 162 acts as the Proton acceptor in catalysis. Residue lysine 166 is the Lowers pKa of active site Tyr of the active site.

The protein belongs to the short-chain dehydrogenases/reductases (SDR) family.

Its function is as follows. Hydroxynaphthalene reductase-like protein; part of the Pks2 gene cluster that mediates the formation of infectious structures (appressoria), enabling these fungi to kill insects faster. The product of the Pks2 gene cluster is different from the one of Pks1 and has still not been identified. In Metarhizium anisopliae (strain ARSEF 549), this protein is Hydroxynaphthalene reductase-like protein Arp2.